The chain runs to 412 residues: Transforming growth factor beta-3 proprotein (412 aa).

An N-terminal signal peptide occupies residues 1 to 23 (MKMHLQRALVVLALLNLATVSLS). 3 N-linked (GlcNAc...) asparagine glycosylation sites follow: Asn-74, Asn-135, and Asn-142. The Cell attachment site motif lies at 261 to 263 (RGD). At Gln-293 the chain carries N5-methylglutamine. 4 cysteine pairs are disulfide-bonded: Cys-307/Cys-316, Cys-315/Cys-378, Cys-344/Cys-409, and Cys-348/Cys-411.

The protein belongs to the TGF-beta family. In terms of assembly, interacts with ASPN. Latency-associated peptide: Homodimer; disulfide-linked. Latency-associated peptide: Interacts with Transforming growth factor beta-3 (TGF-beta-3) chain; interaction is non-covalent and maintains (TGF-beta-3) in a latent state. Latency-associated peptide: Interacts with LRRC32/GARP; leading to regulate activation of TGF-beta-3 and promote epithelial fusion during palate development. Latency-associated peptide: Interacts (via cell attachment site) with integrins, leading to release of the active TGF-beta-3. Transforming growth factor beta-3: Homodimer; disulfide-linked. Transforming growth factor beta-3: Interacts with TGF-beta receptors (TGFBR1 and TGFBR2), leading to signal transduction. Transforming growth factor beta-3 proprotein: The precursor proprotein is cleaved in the Golgi apparatus to form Transforming growth factor beta-3 (TGF-beta-3) and Latency-associated peptide (LAP) chains, which remain non-covalently linked, rendering TGF-beta-3 inactive. Post-translationally, methylated at Gln-293 by N6AMT1. In terms of tissue distribution, expressed in cardiomyocytes.

The protein localises to the secreted. It is found in the extracellular space. It localises to the extracellular matrix. Functionally, transforming growth factor beta-3 proprotein: Precursor of the Latency-associated peptide (LAP) and Transforming growth factor beta-3 (TGF-beta-3) chains, which constitute the regulatory and active subunit of TGF-beta-3, respectively. In terms of biological role, required to maintain the Transforming growth factor beta-3 (TGF-beta-3) chain in a latent state during storage in extracellular matrix. Associates non-covalently with TGF-beta-3 and regulates its activation via interaction with 'milieu molecules', such as LTBP1 and LRRC32/GARP, that control activation of TGF-beta-3. Interaction with integrins results in distortion of the Latency-associated peptide chain and subsequent release of the active TGF-beta-3. Transforming growth factor beta-3: Multifunctional protein that regulates embryogenesis and cell differentiation and is required in various processes such as secondary palate development. Activation into mature form follows different steps: following cleavage of the proprotein in the Golgi apparatus, Latency-associated peptide (LAP) and Transforming growth factor beta-3 (TGF-beta-3) chains remain non-covalently linked rendering TGF-beta-3 inactive during storage in extracellular matrix. At the same time, LAP chain interacts with 'milieu molecules', such as LTBP1 and LRRC32/GARP that control activation of TGF-beta-3 and maintain it in a latent state during storage in extracellular milieus. TGF-beta-3 is released from LAP by integrins: integrin-binding results in distortion of the LAP chain and subsequent release of the active TGF-beta-3. Once activated following release of LAP, TGF-beta-3 acts by binding to TGF-beta receptors (TGFBR1 and TGFBR2), which transduce signal. This Rattus norvegicus (Rat) protein is Transforming growth factor beta-3 proprotein (Tgfb3).